Here is a 210-residue protein sequence, read N- to C-terminus: MKIVEVRHPLVQHKIGLMRNAALSTKDFRELANELGTLLAYEATADLETEPHTLPGWAGPITVQRIAGAKITVVPILRAGLGMLSGVLSLIPAARVSVVGLQRDEETLQPVPYFERLTGRLEERDALILDPMLATGGTLIATIDMLKRAGARRIKGIFLVAAPEGIEAVKAVHPDVEIYTAAIDAQLNDKGYILPGLGDAGDRIFGTRVG.

5-phospho-alpha-D-ribose 1-diphosphate is bound by residues Arg78, Arg103, and 130-138; that span reads DPMLATGGT. Uracil contacts are provided by residues Ile193 and 198–200; that span reads GDA. Asp199 is a binding site for 5-phospho-alpha-D-ribose 1-diphosphate.

It belongs to the UPRTase family. Mg(2+) is required as a cofactor.

It carries out the reaction UMP + diphosphate = 5-phospho-alpha-D-ribose 1-diphosphate + uracil. It participates in pyrimidine metabolism; UMP biosynthesis via salvage pathway; UMP from uracil: step 1/1. Its activity is regulated as follows. Allosterically activated by GTP. In terms of biological role, catalyzes the conversion of uracil and 5-phospho-alpha-D-ribose 1-diphosphate (PRPP) to UMP and diphosphate. This is Uracil phosphoribosyltransferase from Stenotrophomonas maltophilia (strain R551-3).